The sequence spans 535 residues: Calcium-dependent protein kinase 5 (535 aa).

Residues 1–46 (MGNACRGSFGGKTFQGYPQPQDHSESNSNPKHNSDSPKPKKEQQPL) form a disordered region. A lipid anchor (N-myristoyl glycine) is attached at glycine 2. A lipid anchor (S-palmitoyl cysteine) is attached at cysteine 5. Positions 32–43 (HNSDSPKPKKEQ) are enriched in basic and acidic residues. Positions 72–330 (YTLGRKLGQG…AHEVLCHPWI (259 aa)) constitute a Protein kinase domain. ATP is bound by residues 78 to 86 (LGQGQFGTT) and lysine 101. Catalysis depends on aspartate 196, which acts as the Proton acceptor. Positions 336–366 (APDRALDPAVLSRLKHFSAMNKLKKMALRVI) are autoinhibitory domain. EF-hand domains follow at residues 373–408 (EEIAGLKEMFKAMDTDNSGAITFDELKAGLRKYGST), 409–444 (LKDIEIRELMDAADVDNSGTIDYGEFIAATIHLNKL), 445–480 (DREEHLMAAFQYFDKDGSGYITVDELQQACADHNIT), and 484–514 (FEDIIREVDQDNDGRIDYGEFVAMMQKGNPC). Ca(2+) is bound by residues aspartate 386, aspartate 388, serine 390, glutamate 397, aspartate 422, aspartate 424, serine 426, threonine 428, glutamate 433, aspartate 458, aspartate 460, serine 462, tyrosine 464, glutamate 469, aspartate 492, aspartate 494, aspartate 496, arginine 498, and glutamate 503.

The protein belongs to the protein kinase superfamily. Ser/Thr protein kinase family. CDPK subfamily.

The protein resides in the cell membrane. It catalyses the reaction L-seryl-[protein] + ATP = O-phospho-L-seryl-[protein] + ADP + H(+). It carries out the reaction L-threonyl-[protein] + ATP = O-phospho-L-threonyl-[protein] + ADP + H(+). Its activity is regulated as follows. Activated by calcium. Autophosphorylation may play an important role in the regulation of the kinase activity. Regulates the production of reactive oxygen species (ROS) by NADPH oxidase. The protein is Calcium-dependent protein kinase 5 (CPK5) of Solanum tuberosum (Potato).